Consider the following 363-residue polypeptide: Serpentine receptor class beta-17 (363 aa).

A run of 7 helical transmembrane segments spans residues 46-66, 75-95, 120-140, 169-189, 214-234, 273-293, and 304-324; these read AFLL…GSII, LLAF…SCFL, VILA…SMLC, IGFV…LYMY, YIFI…IGLY, CAQL…RIFL, and VTEF…ICIV.

The protein belongs to the nematode receptor-like protein srb family.

Its subcellular location is the membrane. The sequence is that of Serpentine receptor class beta-17 (srb-17) from Caenorhabditis elegans.